Reading from the N-terminus, the 544-residue chain is L-aspartate oxidase (544 aa).

Residues Ser17–Ala20, Lys39, Ser46–Gly53, and Asp221 contribute to the FAD site. The active-site Proton donor/acceptor is the Arg288. FAD contacts are provided by residues Glu373 and Ser389–Leu390.

The protein belongs to the FAD-dependent oxidoreductase 2 family. NadB subfamily. The cofactor is FAD.

Its subcellular location is the cytoplasm. It catalyses the reaction L-aspartate + O2 = iminosuccinate + H2O2. It functions in the pathway cofactor biosynthesis; NAD(+) biosynthesis; iminoaspartate from L-aspartate (oxidase route): step 1/1. Catalyzes the oxidation of L-aspartate to iminoaspartate, the first step in the de novo biosynthesis of NAD(+). This Acinetobacter baylyi (strain ATCC 33305 / BD413 / ADP1) protein is L-aspartate oxidase.